We begin with the raw amino-acid sequence, 207 residues long: Thiamine-phosphate synthase (207 aa).

Residues 36 to 40 (QLRMK) and N68 contribute to the 4-amino-2-methyl-5-(diphosphooxymethyl)pyrimidine site. The Mg(2+) site is built by D69 and D88. S106 is a 4-amino-2-methyl-5-(diphosphooxymethyl)pyrimidine binding site. 132 to 134 (TNT) is a 2-[(2R,5Z)-2-carboxy-4-methylthiazol-5(2H)-ylidene]ethyl phosphate binding site. Position 135 (K135) interacts with 4-amino-2-methyl-5-(diphosphooxymethyl)pyrimidine. 2-[(2R,5Z)-2-carboxy-4-methylthiazol-5(2H)-ylidene]ethyl phosphate contacts are provided by residues G162 and 182-183 (VS).

The protein belongs to the thiamine-phosphate synthase family. Mg(2+) is required as a cofactor.

The enzyme catalyses 2-[(2R,5Z)-2-carboxy-4-methylthiazol-5(2H)-ylidene]ethyl phosphate + 4-amino-2-methyl-5-(diphosphooxymethyl)pyrimidine + 2 H(+) = thiamine phosphate + CO2 + diphosphate. It catalyses the reaction 2-(2-carboxy-4-methylthiazol-5-yl)ethyl phosphate + 4-amino-2-methyl-5-(diphosphooxymethyl)pyrimidine + 2 H(+) = thiamine phosphate + CO2 + diphosphate. The catalysed reaction is 4-methyl-5-(2-phosphooxyethyl)-thiazole + 4-amino-2-methyl-5-(diphosphooxymethyl)pyrimidine + H(+) = thiamine phosphate + diphosphate. It participates in cofactor biosynthesis; thiamine diphosphate biosynthesis; thiamine phosphate from 4-amino-2-methyl-5-diphosphomethylpyrimidine and 4-methyl-5-(2-phosphoethyl)-thiazole: step 1/1. In terms of biological role, condenses 4-methyl-5-(beta-hydroxyethyl)thiazole monophosphate (THZ-P) and 2-methyl-4-amino-5-hydroxymethyl pyrimidine pyrophosphate (HMP-PP) to form thiamine monophosphate (TMP). The polypeptide is Thiamine-phosphate synthase (Methanococcus maripaludis (strain C7 / ATCC BAA-1331)).